A 425-amino-acid polypeptide reads, in one-letter code: 26S proteasome regulatory subunit 7 (425 aa).

An ATP-binding site is contributed by 208–215; it reads GPPGTGKT.

It belongs to the AAA ATPase family.

The protein localises to the cytoplasm. The protein resides in the nucleus. Its function is as follows. The 26S proteasome is involved in the ATP-dependent degradation of ubiquitinated proteins. The regulatory (or ATPase) complex confers ATP dependency and substrate specificity to the 26S complex. The protein is 26S proteasome regulatory subunit 7 (RPT1) of Prunus persica (Peach).